We begin with the raw amino-acid sequence, 331 residues long: Calcium-binding and coiled-coil domain-containing protein 2 (331 aa).

The short motif at 128-131 (IMVV) is the CLIR element. Residues 132–309 (INKEKVEEME…EKASWEKEKA (178 aa)) adopt a coiled-coil conformation. The interval 189 to 310 (KASWEKEKAS…KASWEKEKAP (122 aa)) is disordered. An LIR-like motif is present at residues 190–193 (ASWE). The interaction with LGALS8 stretch occupies residues 292 to 302 (KEKASWEEEKA).

The protein belongs to the CALCOCO family. In terms of assembly, dimer. Part of a complex consisting of CALCOCO2, TAX1BP1 and MYO6. Interacts with MYO6. Interacts with GEMIN4. Interacts with ATG8 family members MAP1LC3A, MAP1LC3B, GABARAP, GABARAPL1 and GABARAPL2. Interacts with ATG8 family member MAP1LC3C. Interacts with LGALS8. Interacts with TOM1; the interaction is indirect and is mediated by MYO6, which acts as a bridge between TOM1 and CALCOCO2. Interacts with AZI2.

It localises to the cytoplasm. The protein localises to the perinuclear region. Its subcellular location is the cytoskeleton. It is found in the cytoplasmic vesicle. The protein resides in the autophagosome membrane. In terms of biological role, xenophagy-specific receptor required for autophagy-mediated intracellular bacteria degradation. Acts as an effector protein of galectin-sensed membrane damage that restricts the proliferation of infecting pathogens upon entry into the cytosol by targeting LGALS8-associated bacteria for autophagy. Initially orchestrates bacteria targeting to autophagosomes and subsequently ensures pathogen degradation by regulating pathogen-containing autophagosome maturation. Bacteria targeting to autophagosomes relies on its interaction with MAP1LC3A, MAP1LC3B and/or GABARAPL2, whereas regulation of pathogen-containing autophagosome maturation requires the interaction with MAP3LC3C. May play a role in ruffle formation and actin cytoskeleton organization and seems to negatively regulate constitutive secretion. This Mus musculus (Mouse) protein is Calcium-binding and coiled-coil domain-containing protein 2.